The following is a 1088-amino-acid chain: Tyrocidine synthase 1 (1088 aa).

The region spanning 528–602 is the Carrier domain; it reads PPRTETESIL…QVALFVKSTT (75 aa). At serine 563 the chain carries O-(pantetheine 4'-phosphoryl)serine.

It belongs to the ATP-dependent AMP-binding enzyme family. In terms of assembly, large multienzyme complex of TycA, TycB and TycC. It depends on pantetheine 4'-phosphate as a cofactor.

It catalyses the reaction L-phenylalanine + ATP + H2O = D-phenylalanine + AMP + diphosphate + H(+). It functions in the pathway antibiotic biosynthesis; tyrocidine biosynthesis. In terms of biological role, in the first step of peptide synthesis this enzyme activates phenylalanine and racemizes it to the D-isomer. This chain is Tyrocidine synthase 1 (tycA), found in Brevibacillus parabrevis.